The primary structure comprises 334 residues: Beta-hexosaminidase (334 aa).

Residues Asp-60, Arg-68, Arg-133, and 163-164 contribute to the substrate site; that span reads KH. His-176 serves as the catalytic Proton donor/acceptor. Asp-247 functions as the Nucleophile in the catalytic mechanism.

It belongs to the glycosyl hydrolase 3 family. NagZ subfamily.

It is found in the cytoplasm. The catalysed reaction is Hydrolysis of terminal non-reducing N-acetyl-D-hexosamine residues in N-acetyl-beta-D-hexosaminides.. It functions in the pathway cell wall biogenesis; peptidoglycan recycling. Its function is as follows. Plays a role in peptidoglycan recycling by cleaving the terminal beta-1,4-linked N-acetylglucosamine (GlcNAc) from peptide-linked peptidoglycan fragments, giving rise to free GlcNAc, anhydro-N-acetylmuramic acid and anhydro-N-acetylmuramic acid-linked peptides. This chain is Beta-hexosaminidase, found in Xanthomonas euvesicatoria pv. vesicatoria (strain 85-10) (Xanthomonas campestris pv. vesicatoria).